Consider the following 127-residue polypeptide: Chondrosarcoma-associated gene 2/3 protein (127 aa).

A disordered region spans residues 68 to 127 (MSRKPRASSPLSNNHPPTPKRRGSGRHPLNPGPEALSKFPRQPGREKGPIKEVPGTKGSP).

In terms of tissue distribution, weakly expressed in kidney. Expressed in various tumor cell lines including carcinomas, myeloid and lymphoid malignancies, melanomas and prostate cancer. Overexpressed in taxol-resistant breast cancer line MDA 435TR and the doxorubicin-resistant multiple myelanoma lines RPMI-8226/Dox40 and RPMI-8226/MDR10V.

Drug-resistance related protein, its expression is associated with the chemotherapy resistant and neoplastic phenotype. May also be linked to the malignant phenotype. This Homo sapiens (Human) protein is Chondrosarcoma-associated gene 2/3 protein (CSAG2).